A 248-amino-acid polypeptide reads, in one-letter code: Probable proteasome subunit alpha type-3 (248 aa).

It belongs to the peptidase T1A family. As to quaternary structure, the 26S proteasome consists of a 20S proteasome core and two 19S regulatory subunits. The 20S proteasome core is composed of 28 subunits that are arranged in four stacked rings, resulting in a barrel-shaped structure. The two end rings are each formed by seven alpha subunits, and the two central rings are each formed by seven beta subunits. The catalytic chamber with the active sites is on the inside of the barrel.

Its subcellular location is the cytoplasm. The protein localises to the nucleus. The proteasome is a multicatalytic proteinase complex which is characterized by its ability to cleave peptides with Arg, Phe, Tyr, Leu, and Glu adjacent to the leaving group at neutral or slightly basic pH. The proteasome has an ATP-dependent proteolytic activity. The polypeptide is Probable proteasome subunit alpha type-3 (Schizosaccharomyces pombe (strain 972 / ATCC 24843) (Fission yeast)).